Reading from the N-terminus, the 173-residue chain is Crossover junction endodeoxyribonuclease RuvC (173 aa).

Residues aspartate 8, glutamate 67, and aspartate 139 contribute to the active site. Residues aspartate 8, glutamate 67, and aspartate 139 each contribute to the Mg(2+) site.

Belongs to the RuvC family. As to quaternary structure, homodimer which binds Holliday junction (HJ) DNA. The HJ becomes 2-fold symmetrical on binding to RuvC with unstacked arms; it has a different conformation from HJ DNA in complex with RuvA. In the full resolvosome a probable DNA-RuvA(4)-RuvB(12)-RuvC(2) complex forms which resolves the HJ. Mg(2+) serves as cofactor.

The protein localises to the cytoplasm. The enzyme catalyses Endonucleolytic cleavage at a junction such as a reciprocal single-stranded crossover between two homologous DNA duplexes (Holliday junction).. Functionally, the RuvA-RuvB-RuvC complex processes Holliday junction (HJ) DNA during genetic recombination and DNA repair. Endonuclease that resolves HJ intermediates. Cleaves cruciform DNA by making single-stranded nicks across the HJ at symmetrical positions within the homologous arms, yielding a 5'-phosphate and a 3'-hydroxyl group; requires a central core of homology in the junction. The consensus cleavage sequence is 5'-(A/T)TT(C/G)-3'. Cleavage occurs on the 3'-side of the TT dinucleotide at the point of strand exchange. HJ branch migration catalyzed by RuvA-RuvB allows RuvC to scan DNA until it finds its consensus sequence, where it cleaves and resolves the cruciform DNA. The protein is Crossover junction endodeoxyribonuclease RuvC of Aeromonas salmonicida (strain A449).